The chain runs to 244 residues: Ribosomal RNA small subunit methyltransferase G (244 aa).

S-adenosyl-L-methionine-binding positions include G79, F84, 102–104, 130–131, and R149; these read DST and AE. The disordered stretch occupies residues 225-244; that stretch reads DRYPRREGVPNQQPLFWSAK. Positions 234–244 are enriched in polar residues; that stretch reads PNQQPLFWSAK.

Belongs to the methyltransferase superfamily. RNA methyltransferase RsmG family.

The protein resides in the cytoplasm. Functionally, specifically methylates the N7 position of a guanine in 16S rRNA. The chain is Ribosomal RNA small subunit methyltransferase G from Deinococcus deserti (strain DSM 17065 / CIP 109153 / LMG 22923 / VCD115).